A 435-amino-acid polypeptide reads, in one-letter code: Minor fimbrial subunit HifE (435 aa).

An N-terminal signal peptide occupies residues 1-31 (MKTLTTYAKYFTPISKIAFLFCFLMGNIAEA).

The protein belongs to the fimbrial protein family.

The protein localises to the fimbrium. Its function is as follows. May be a minor structural protein required for pilus biogenesis. May be the adhesive component in the pili. The sequence is that of Minor fimbrial subunit HifE (hifE) from Haemophilus influenzae.